Here is a 903-residue protein sequence, read N- to C-terminus: Dual serine/threonine and tyrosine protein kinase (903 aa).

Positions 382-414 (ANRKQEEMKEMIVETLESMKEQLLEDAANLEFT) form a coiled coil. The Protein kinase domain occupies 627–881 (PKLGRELGRG…PLLGIVQPSL (255 aa)). ATP is bound by residues 633 to 641 (LGRGQYGVV) and lysine 656. Aspartate 752 serves as the catalytic Proton acceptor.

The protein belongs to the protein kinase superfamily. Ser/Thr protein kinase family.

It localises to the cytoplasm. Its subcellular location is the cell membrane. The protein resides in the apical cell membrane. The protein localises to the basolateral cell membrane. It is found in the cell junction. It carries out the reaction L-seryl-[protein] + ATP = O-phospho-L-seryl-[protein] + ADP + H(+). It catalyses the reaction L-threonyl-[protein] + ATP = O-phospho-L-threonyl-[protein] + ADP + H(+). The catalysed reaction is L-tyrosyl-[protein] + ATP = O-phospho-L-tyrosyl-[protein] + ADP + H(+). May act as a positive regulator of ERK phosphorylation downstream of fibroblast growth factor-receptor activation. May induce both caspase-dependent apoptosis and caspase-independent cell death. May play a role in the embryonic development. In Pimephales promelas (Fathead minnow), this protein is Dual serine/threonine and tyrosine protein kinase.